Here is a 203-residue protein sequence, read N- to C-terminus: N-(5'-phosphoribosyl)anthranilate isomerase (203 aa).

The protein belongs to the TrpF family.

The enzyme catalyses N-(5-phospho-beta-D-ribosyl)anthranilate = 1-(2-carboxyphenylamino)-1-deoxy-D-ribulose 5-phosphate. Its pathway is amino-acid biosynthesis; L-tryptophan biosynthesis; L-tryptophan from chorismate: step 3/5. The polypeptide is N-(5'-phosphoribosyl)anthranilate isomerase (Sulfurihydrogenibium sp. (strain YO3AOP1)).